The sequence spans 373 residues: Transcription factor NF-E2 45 kDa subunit (373 aa).

2 disordered regions span residues 1–22 and 40–60; these read MPPCPPQPNRNRLPQLPTGELG and LNVPSEPSFEPQAPTPYPGPL. The segment at 1 to 83 is required for interaction with MAPK8; the sequence is MPPCPPQPNR…AGFTLPPPPY (83 aa). Residues 1–206 form a transactivation domain region; that stretch reads MPPCPPQPNR…PPTETPLVLE (206 aa). 2 short sequence motifs (PXY motif) span residues 61–65 and 79–83; these read PPPTY and PPPPY. The segment at 131-163 is disordered; that stretch reads LPVGQPKPQEDPESDSGLSLNYSDAESLELEGT. Ser-157 bears the Phosphoserine; by MAPK8 mark. Ser-170 carries the phosphoserine; by PKA modification. Residues 206 to 225 form a disordered region; sequence ESSSGPVRAKPAVRGEAGSR. Positions 266-329 constitute a bZIP domain; it reads LVRDIRRRGK…EVMRQQLTEL (64 aa). Positions 268–287 are basic motif; that stretch reads RDIRRRGKNKVAAQNCRKRK. Positions 291–298 are leucine-zipper; it reads IVQLEREL. Lys-368 is covalently cross-linked (Glycyl lysine isopeptide (Lys-Gly) (interchain with G-Cter in SUMO); alternate). Residue Lys-368 forms a Glycyl lysine isopeptide (Lys-Gly) (interchain with G-Cter in SUMO1); alternate linkage.

Belongs to the bZIP family. CNC subfamily. As to quaternary structure, homodimer; can bind DNA as a homodimer. Erythroid transcription activator nuclear factor erythroid-derived 2 (NF-E2), composed of a heterodimer of NFE2 and MAFK, possesses transactivation activity on beta-globin. Also forms high affinity heterodimer with MAFG; the interaction promotes erythropoiesis. Interacts (via the PXY motif 1) with ITCH (via the WW 1 domain); the interaction promotes 'Lys63'-linked ubiquitination of NFE2, translocates it to the cytoplasm and inhibits its transactivation activity. Interacts with KMT2D/MLL2; the interaction promotes transactivation of the beta-globin locus. Interacts with MAPK8 (phosphorylated form); the interaction leads to phosphorylation of NFE2 in undifferentiated cells. In terms of processing, phosphorylated on serine residues. In undifferentiated erythrocytes, phosphorylated by MAPK8 which then leads to ubiquitination and protein degradation. Sumoylated. Sumoylation is required for translocation to nuclear bodies PODs, anchoring to the gene loci, and transactivation of the beta-globin gene. Post-translationally, ubiquitinated mainly by 'Lys63'-linked ubiquitin. Polyubiquitination with 'Lys63'-linked ubiquitin by ITCH retains NFE2 in the cytoplasm preventing its transactivation activity. In undifferentiated erythrocyte, ubiquitinated after MAPK8-mediatd phosphorylation leading to protein degradation.

It is found in the nucleus. The protein resides in the PML body. Its subcellular location is the cytoplasm. Its function is as follows. Component of the NF-E2 complex essential for regulating erythroid and megakaryocytic maturation and differentiation. Binds to the hypersensitive site 2 (HS2) of the beta-globin control region (LCR). This subunit (NFE2) recognizes the TCAT/C sequence of the AP-1-like core palindrome present in a number of erythroid and megakaryocytic gene promoters. Requires MAFK or other small MAF proteins for binding to the NF-E2 motif. May play a role in all aspects of hemoglobin production from globin and heme synthesis to procurement of iron. In Rattus norvegicus (Rat), this protein is Transcription factor NF-E2 45 kDa subunit (Nfe2).